The sequence spans 89 residues: Small ribosomal subunit protein uS15 (89 aa).

It belongs to the universal ribosomal protein uS15 family. Part of the 30S ribosomal subunit. Forms a bridge to the 50S subunit in the 70S ribosome, contacting the 23S rRNA.

One of the primary rRNA binding proteins, it binds directly to 16S rRNA where it helps nucleate assembly of the platform of the 30S subunit by binding and bridging several RNA helices of the 16S rRNA. Functionally, forms an intersubunit bridge (bridge B4) with the 23S rRNA of the 50S subunit in the ribosome. The sequence is that of Small ribosomal subunit protein uS15 from Thiobacillus denitrificans (strain ATCC 25259 / T1).